A 419-amino-acid chain; its full sequence is MTAESDSPDGPVSAGTGRPVRLSLTRRAARPARHLADLSRDERRQVAVALGQPAFRADQVSRHYFARLVDADETDAMTDLPENARGPLLEALLPRLLVPARTLSCDDGLTRKTAWRTADGALLESVIMRYPDRATVCVSSQAGCGMGCPFCATGQGGLTRNLSTAEIVEQVVHAARVLRRQELAGGQGRLSNVVFMGMGEPLANYTAVTAALRRLIAPSPEGLGLSARGLTVSTVGLVPAMRRLAGEGLPVTLAVSLHAPDDELRDELVPINTRWPVAEVLAAAWEYAEVTGRRVSIEYALIDGVNDDVARADALATLLAGRLAHVNLIPLNPTEGSSWQASAPAGQRAFVRRLRERGIATTVRDTRGREIAAACGQLAAEPAGRARRVESARPVESARPVGVAGAASGSPAHGSRVLR.

A disordered region spans residues 1-21 (MTAESDSPDGPVSAGTGRPVR). The Proton acceptor role is filled by Glu124. The region spanning 130 to 369 (YPDRATVCVS…ATTVRDTRGR (240 aa)) is the Radical SAM core domain. Cys137 and Cys375 are joined by a disulfide. Residues Cys144, Cys148, and Cys151 each contribute to the [4Fe-4S] cluster site. S-adenosyl-L-methionine-binding positions include 199 to 200 (GE), Ser233, 256 to 258 (SLH), and Asn332. Cys375 acts as the S-methylcysteine intermediate in catalysis. Positions 383–419 (AGRARRVESARPVESARPVGVAGAASGSPAHGSRVLR) are disordered. Low complexity predominate over residues 397–419 (SARPVGVAGAASGSPAHGSRVLR).

Belongs to the radical SAM superfamily. RlmN family. The cofactor is [4Fe-4S] cluster.

The protein resides in the cytoplasm. It catalyses the reaction adenosine(2503) in 23S rRNA + 2 reduced [2Fe-2S]-[ferredoxin] + 2 S-adenosyl-L-methionine = 2-methyladenosine(2503) in 23S rRNA + 5'-deoxyadenosine + L-methionine + 2 oxidized [2Fe-2S]-[ferredoxin] + S-adenosyl-L-homocysteine. The enzyme catalyses adenosine(37) in tRNA + 2 reduced [2Fe-2S]-[ferredoxin] + 2 S-adenosyl-L-methionine = 2-methyladenosine(37) in tRNA + 5'-deoxyadenosine + L-methionine + 2 oxidized [2Fe-2S]-[ferredoxin] + S-adenosyl-L-homocysteine. Functionally, specifically methylates position 2 of adenine 2503 in 23S rRNA and position 2 of adenine 37 in tRNAs. In Frankia alni (strain DSM 45986 / CECT 9034 / ACN14a), this protein is Probable dual-specificity RNA methyltransferase RlmN.